We begin with the raw amino-acid sequence, 85 residues long: ATP synthase subunit c (85 aa).

2 helical membrane passes run 10–30 (IAVAIIVGLCAVGTAIGFAVL) and 53–73 (FIIAGLLDAVPMIGIVIALLF).

This sequence belongs to the ATPase C chain family. In terms of assembly, F-type ATPases have 2 components, F(1) - the catalytic core - and F(0) - the membrane proton channel. F(1) has five subunits: alpha(3), beta(3), gamma(1), delta(1), epsilon(1). F(0) has three main subunits: a(1), b(2) and c(10-14). The alpha and beta chains form an alternating ring which encloses part of the gamma chain. F(1) is attached to F(0) by a central stalk formed by the gamma and epsilon chains, while a peripheral stalk is formed by the delta and b chains.

It localises to the cell inner membrane. In terms of biological role, f(1)F(0) ATP synthase produces ATP from ADP in the presence of a proton or sodium gradient. F-type ATPases consist of two structural domains, F(1) containing the extramembraneous catalytic core and F(0) containing the membrane proton channel, linked together by a central stalk and a peripheral stalk. During catalysis, ATP synthesis in the catalytic domain of F(1) is coupled via a rotary mechanism of the central stalk subunits to proton translocation. Key component of the F(0) channel; it plays a direct role in translocation across the membrane. A homomeric c-ring of between 10-14 subunits forms the central stalk rotor element with the F(1) delta and epsilon subunits. The chain is ATP synthase subunit c from Vibrio cholerae serotype O1 (strain ATCC 39315 / El Tor Inaba N16961).